Consider the following 1054-residue polypeptide: MSKKRVHEIAKELKGHGIELDNKEVVTELAGLGYDVKSHSSSLDDDQATAAVQKILDKRKPKQAAAPVTAKGFVVRRKVGPPTGSGVYDASQEPSQAASDVSSPPSEPVHEASGAEAAASERVPEAAAVQEPVAEAPRAAASEPAAEAPKATAPVAPEPTVEAPKAAAPVAPEPTVEAPKTEAPVAAAPIAEAPTPPARTEVPVTSGRRAASCRGAAPLPCSGKDPLALNSSPQSSAAFCPDARNPGDCDFPSTSGRWHAWPSRGSSGRFAHGAGRPSGWTFARWTSGRPRAASRRTAVQRPSGRAGAGASHGLQRRKGFGAGAQASGQPQNVTMVGGIPHAPTAPDARALRPTATQAVVISRPLIQVRRVTPTTSSAKQYPMAPGKKAIGEVREFKVVPDHAGRGRELVDVSKNKDKSPRKRGGPNDTSISKQELTDLAWGRVNIPLRGKKKKPTKKGAKTQITQMAEDKKVIKLQEGISVSDLGQRMGVRTSDIIKKLMGLGKMATANQMVDADTVELIASDYGWKVDRVGFEVEDYLPEVVARPEDARTRPPVVTVMGHVDHGKTSLLDAIRAANVASGEAGGITQHIGAYSVTTARGDITFLDTPGHEAFTSMRARGANVTDIVILVVAADDGVMPQTIEAIKHAKAAEVPIVVALNKMDVPGANPDRVKKDLANHELVPEEWGGETIMVPVSAKQKMGIDLLLENVVLQAEVLELTSNPSRPAVGAIIEGELDRGRGPVATVLVQEGTLRVGDAVVTGTDYGRVRAMNNSRGESVKEVLPGYCAEVIGLSGVPSAGDTINVVADEKAAKQIAEHRGMKERQSELSKVSRETLDQLFAKTKAGGGPKELRVVIKADVQGSAEAVKQAVQKLTTHKVKVEVIDTGVGAITESDVMRAAASKGVVLGFNVKPESGAESAAKAEGVMLRSFSIIYELIDGVRSSMEELLEPIRTERKLGRAEVRNTFNVPKLGTIAGAAVLDGVIKRGAFVRLMRENKQLFAGKMASLRRFKDDVKEVAQGFECGIGIENFNDLKAGDIIEAYEIEETRQSLT.

4 disordered regions span residues Asp57–Cys213, Asp225–Asp248, Ser287–Gln315, and Asp401–Leu436. The segment covering Gln92 to Pro104 has biased composition (polar residues). Over residues Glu111–Cys213 the composition is skewed to low complexity. Positions Asp401–Lys418 are enriched in basic and acidic residues. One can recognise a tr-type G domain in the interval Thr552 to Thr721. The G1 stretch occupies residues Gly561–Thr568. Gly561–Thr568 is a binding site for GTP. The tract at residues Gly586–His590 is G2. The segment at Asp607–Gly610 is G3. GTP is bound by residues Asp607 to His611 and Asn661 to Asp664. The tract at residues Asn661 to Asp664 is G4. Residues Ser697–Lys699 are G5.

The protein belongs to the TRAFAC class translation factor GTPase superfamily. Classic translation factor GTPase family. IF-2 subfamily.

It localises to the cytoplasm. In terms of biological role, one of the essential components for the initiation of protein synthesis. Protects formylmethionyl-tRNA from spontaneous hydrolysis and promotes its binding to the 30S ribosomal subunits. Also involved in the hydrolysis of GTP during the formation of the 70S ribosomal complex. This Stigmatella aurantiaca protein is Translation initiation factor IF-2 (infB).